We begin with the raw amino-acid sequence, 247 residues long: 1-(5-phosphoribosyl)-5-[(5-phosphoribosylamino)methylideneamino] imidazole-4-carboxamide isomerase (247 aa).

Asp-8 functions as the Proton acceptor in the catalytic mechanism. Asp-130 serves as the catalytic Proton donor.

Belongs to the HisA/HisF family.

The protein resides in the cytoplasm. It catalyses the reaction 1-(5-phospho-beta-D-ribosyl)-5-[(5-phospho-beta-D-ribosylamino)methylideneamino]imidazole-4-carboxamide = 5-[(5-phospho-1-deoxy-D-ribulos-1-ylimino)methylamino]-1-(5-phospho-beta-D-ribosyl)imidazole-4-carboxamide. It participates in amino-acid biosynthesis; L-histidine biosynthesis; L-histidine from 5-phospho-alpha-D-ribose 1-diphosphate: step 4/9. This is 1-(5-phosphoribosyl)-5-[(5-phosphoribosylamino)methylideneamino] imidazole-4-carboxamide isomerase from Leptospira biflexa serovar Patoc (strain Patoc 1 / Ames).